A 397-amino-acid polypeptide reads, in one-letter code: Acetate kinase (397 aa).

Asn8 serves as a coordination point for Mg(2+). Residue Lys15 participates in ATP binding. Position 89 (Arg89) interacts with substrate. Asp146 acts as the Proton donor/acceptor in catalysis. ATP contacts are provided by residues 206–210 (HLGNG), 281–283 (DLR), and 329–333 (GVGEN). Glu382 serves as a coordination point for Mg(2+).

Belongs to the acetokinase family. As to quaternary structure, homodimer. The cofactor is Mg(2+). It depends on Mn(2+) as a cofactor.

The protein localises to the cytoplasm. The catalysed reaction is acetate + ATP = acetyl phosphate + ADP. It participates in metabolic intermediate biosynthesis; acetyl-CoA biosynthesis; acetyl-CoA from acetate: step 1/2. Functionally, catalyzes the formation of acetyl phosphate from acetate and ATP. Can also catalyze the reverse reaction. The chain is Acetate kinase from Bacillus thuringiensis subsp. konkukian (strain 97-27).